A 445-amino-acid chain; its full sequence is MSTHLTETWEKAINIIKGELTEVSFNTWIKSINPISLENNSLKLAVPNDFTKGILESRYKDLIVNALKLLTSKKYNIDFIVTTEEKIEKNHNNEKSNIVVNDEMSTMLNPKYTFDSFVIGNSNRFAHAASLAVAESPAKAYNPLFIYGGVGLGKTHLMHAIGHYILHNNPKSQVVYVSSEKFTNELINSIKDDKNVEFRNKYRNIDILLVDDIQFIAGKERTQEEFFHTFNALYEANKQIIISSDRPPKEIPTLEDRLRSRFEWGLIADIQAPDFETRMAILKKKADVEKLNIPNEVMVYIATKIKSNIRELEGALIRIVAFSSLTNKEISVDLASEALKDIISSKQTRQVTIDIIQEVVANYYNLKIEDLKSARRTRNIAFPRQIAMYLSRKLTDMSLPKIGEEFGGRDHTTVIHAYEKISNNLKKDESLQNAINDLNKRINQK.

The interval 1-73 (MSTHLTETWE…VNALKLLTSK (73 aa)) is domain I, interacts with DnaA modulators. The tract at residues 73–106 (KKYNIDFIVTTEEKIEKNHNNEKSNIVVNDEMST) is domain II. The tract at residues 107 to 323 (MLNPKYTFDS…GALIRIVAFS (217 aa)) is domain III, AAA+ region. The ATP site is built by G151, G153, K154, and T155. The segment at 324-445 (SLTNKEISVD…NDLNKRINQK (122 aa)) is domain IV, binds dsDNA.

It belongs to the DnaA family. Oligomerizes as a right-handed, spiral filament on DNA at oriC.

It is found in the cytoplasm. Its function is as follows. Plays an essential role in the initiation and regulation of chromosomal replication. ATP-DnaA binds to the origin of replication (oriC) to initiate formation of the DNA replication initiation complex once per cell cycle. Binds the DnaA box (a 9 base pair repeat at the origin) and separates the double-stranded (ds)DNA. Forms a right-handed helical filament on oriC DNA; dsDNA binds to the exterior of the filament while single-stranded (ss)DNA is stabiized in the filament's interior. The ATP-DnaA-oriC complex binds and stabilizes one strand of the AT-rich DNA unwinding element (DUE), permitting loading of DNA polymerase. After initiation quickly degrades to an ADP-DnaA complex that is not apt for DNA replication. Binds acidic phospholipids. The sequence is that of Chromosomal replication initiator protein DnaA from Clostridium botulinum (strain Loch Maree / Type A3).